The sequence spans 199 residues: Ribonuclease P protein component 3 (199 aa).

Belongs to the eukaryotic/archaeal RNase P protein component 3 family. Consists of a catalytic RNA component and at least 4-5 protein subunits.

The protein resides in the cytoplasm. It carries out the reaction Endonucleolytic cleavage of RNA, removing 5'-extranucleotides from tRNA precursor.. Its function is as follows. Part of ribonuclease P, a protein complex that generates mature tRNA molecules by cleaving their 5'-ends. The protein is Ribonuclease P protein component 3 of Archaeoglobus fulgidus (strain ATCC 49558 / DSM 4304 / JCM 9628 / NBRC 100126 / VC-16).